We begin with the raw amino-acid sequence, 609 residues long: MWITALLLVVLLLVVVHRVYVGLFTGSSPNPFAEDVKRPPEPLVTDKEARKKVLKQAFSVSRVPEKLDAVVIGSGIGGLASAAVLAKAGKRVLVLEQHTKAGGCCHTFGENGLEFDTGIHYIGRMREGNIGRFILDQITEGQLDWAPMASPFDLMILEGPNGRKEFPMYSGRKEYIQGLKEKFPKEEAVIDKYMELVKVVAHGVSHAILLKFLPLPLTQLLNKFGLLTRFSPFCRASTQSLAEVLKQLGASPELQAVLSYILPTYGVTPSHTTFSLHALLVDHYIQGAYYPRRGSSEIAFHTIPLIQRAGGAVLTRATVQSVLLDSAGRACGVSVKKGQELVNIYCPVVISNAGMFNTYQHLLPESVRYLPDVKKQLTMVKPGLSMLSIFICLKGTKEELKLQSTNYYVYFDTDMDKAMECYVSMPKEKAPEHIPLLFIPFPSSKDPTWEDRFPDRSTMTVLVPTAFEWFEEWQEEPKGKRGVDYETLKNTFREASMSVIMKLFPQLEGKVESVTGGSPLTNQYYLAAHRGATYGADHDLARLHPHAMASLRAQTPIPNLYLTGQDIFTCGLMGALQGALLCSSAILKRNLYSDLQALGSKVRAQKKKK.

The signal sequence occupies residues 1 to 21 (MWITALLLVVLLLVVVHRVYV).

Belongs to the carotenoid/retinoid oxidoreductase family. CrtISO subfamily. NAD(+) serves as cofactor. Requires NADP(+) as cofactor. It depends on FAD as a cofactor. As to expression, highly expressed in liver, kidney and heart.

The protein resides in the endoplasmic reticulum membrane. It catalyses the reaction all-trans-13,14-dihydroretinol + A = all-trans-retinol + AH2. Catalyzes the saturation of all-trans-retinol to all-trans-13,14-dihydroretinol. Does not exhibit any activity toward all-trans-retinoic acid, nor 9-cis, 11-cis or 13-cis-retinol isomers. May play a role in the metabolism of vitamin A. Independently of retinol conversion, may regulate liver metabolism upstream of MLXIPL/ChREBP. May play a role in adipocyte differentiation. The protein is All-trans-retinol 13,14-reductase (Retsat) of Rattus norvegicus (Rat).